The sequence spans 243 residues: Uridylate kinase (243 aa).

An ATP-binding site is contributed by 12–15; it reads KLSG. Residues 20–25 form an involved in allosteric activation by GTP region; sequence GAKGFG. Residues Gly-55 and Arg-59 each coordinate ATP. UMP-binding positions include Asp-74 and 135–142; that span reads TGNPYFTT. ATP-binding residues include Gln-163, Tyr-169, and Asp-172.

Belongs to the UMP kinase family. Homohexamer.

It is found in the cytoplasm. The enzyme catalyses UMP + ATP = UDP + ADP. Its pathway is pyrimidine metabolism; CTP biosynthesis via de novo pathway; UDP from UMP (UMPK route): step 1/1. Allosterically activated by GTP. Inhibited by UTP. Its function is as follows. Catalyzes the reversible phosphorylation of UMP to UDP. The protein is Uridylate kinase of Symbiobacterium thermophilum (strain DSM 24528 / JCM 14929 / IAM 14863 / T).